Reading from the N-terminus, the 332-residue chain is tRNA U34 carboxymethyltransferase (332 aa).

Carboxy-S-adenosyl-L-methionine contacts are provided by residues lysine 96, tryptophan 110, lysine 115, glycine 135, 186–187 (LE), methionine 204, tyrosine 208, and arginine 323.

The protein belongs to the class I-like SAM-binding methyltransferase superfamily. CmoB family. In terms of assembly, homotetramer.

It carries out the reaction carboxy-S-adenosyl-L-methionine + 5-hydroxyuridine(34) in tRNA = 5-carboxymethoxyuridine(34) in tRNA + S-adenosyl-L-homocysteine + H(+). In terms of biological role, catalyzes carboxymethyl transfer from carboxy-S-adenosyl-L-methionine (Cx-SAM) to 5-hydroxyuridine (ho5U) to form 5-carboxymethoxyuridine (cmo5U) at position 34 in tRNAs. The sequence is that of tRNA U34 carboxymethyltransferase from Hydrogenovibrio crunogenus (strain DSM 25203 / XCL-2) (Thiomicrospira crunogena).